The sequence spans 662 residues: Potassium channel KAT3 (662 aa).

Residues 1–90 (MSTTTTEARS…HFDRRYRLWE (90 aa)) are Cytoplasmic-facing. Residues 91–111 (LFLVILVGYSAWASLFELAFE) form a helical membrane-spanning segment. The Extracellular segment spans residues 112–118 (KAAEGAL). The chain crosses the membrane as a helical span at residues 119–139 (LTIDLVVDFFFAVDIILTFFV). The Cytoplasmic segment spans residues 140–163 (SYLDNTTYLNVTDHKLIAKRYLKS). Residues 164 to 184 (VAFVMDVASTLPIQFIYKTIT) form a helical membrane-spanning segment. Residues 185-194 (GDVGRGQAFG) lie on the Extracellular side of the membrane. Residues 195–215 (FLNLLRLWRLRRVAELFKRLE) form a helical; Voltage-sensor membrane-spanning segment. At 216–229 (KDAHFNYFVIRVIK) the chain is on the cytoplasmic side. Residues 230–250 (LLCVTIFWIHLAGCILYWIAY) traverse the membrane as a helical segment. Topologically, residues 251-277 (HYPRPTDTWIGSQVEDFKERSVWLGYT) are extracellular. Positions 278-297 (YSMYWSIVTLTTVGYGDLHA) form an intramembrane region, pore-forming. Residues 298–301 (VNSR) are Extracellular-facing. The chain crosses the membrane as a helical span at residues 302–322 (EKTFNMFYMLFNIGLTSYIIG). Topologically, residues 323–662 (IMTNLVVHGA…LRENDHLYIF (340 aa)) are cytoplasmic. A nucleoside 3',5'-cyclic phosphate is bound at residue 406–527 (LFKGFPEGLL…MIIANFMTYL (122 aa)). Positions 528–558 (KGLNDELKKEIPFLRDLLDDADAQVQETVQS) form a coiled coil. The 72-residue stretch at 591 to 662 (RVIIHGQAPP…LRENDHLYIF (72 aa)) folds into the KHA domain.

The protein belongs to the potassium channel family. Plant (TC 1.A.1.4) subfamily. The potassium channel is probably composed of a homo- or heterotetrameric complex of pore-forming subunits. May interact with AKT1 and AKT2. Interacts with SLAC1. As to expression, expressed predominantly in root hairs and root endodermis and, at a lower level, in leaf nodes, trichomes, and hydathodes.

Its subcellular location is the membrane. Functionally, probable modulatory (alpha) subunit of inward-rectifying potassium channels. Could mediate potassium uptake from the soil solution by plant roots in association with AKT1. This Arabidopsis thaliana (Mouse-ear cress) protein is Potassium channel KAT3 (KAT3).